The primary structure comprises 545 residues: 1,3-beta-glucanosyltransferase ARB_07487 (545 aa).

The first 19 residues, 1–19, serve as a signal peptide directing secretion; it reads MKFSSLAAATALVAGSVVA. N-linked (GlcNAc...) asparagine glycans are attached at residues Asn-51 and Asn-69. Cys-88 and Cys-117 form a disulfide bridge. (1,3-beta-D-glucosyl)n-binding positions include Tyr-106, 133 to 141, Asn-174, and Glu-175; that span reads SEPSTSIIR. Glu-175 serves as the catalytic Proton donor. N-linked (GlcNAc...) asparagine glycosylation is present at Asn-179. Residues Asp-216 and Arg-221 each coordinate (1,3-beta-D-glucosyl)n. Cystine bridges form between Cys-230-Cys-363, Cys-248-Cys-279, Cys-384-Cys-437, Cys-393-Cys-464, and Cys-412-Cys-419. Glu-276 acts as the Nucleophile in catalysis. Tyr-308 contributes to the (1,3-beta-D-glucosyl)n binding site. Residues 493-513 are disordered; that stretch reads GTGSVTSAPGSGGNKPDQGAA. Residue Ala-512 is the site of GPI-anchor amidated alanine attachment. Residues 513 to 545 constitute a propeptide, removed in mature form; that stretch reads ASTISAPSVNLGIVKLGAYIFCAVLAGAGMILI.

This sequence belongs to the glycosyl hydrolase 72 family. The GPI-anchor is attached to the protein in the endoplasmic reticulum and serves to target the protein to the cell surface. There, the glucosamine-inositol phospholipid moiety is cleaved off and the GPI-modified mannoprotein is covalently attached via its lipidless GPI glycan remnant to the 1,6-beta-glucan of the outer cell wall layer.

The protein resides in the secreted. It localises to the cell membrane. Its subcellular location is the cell wall. Splits internally a 1,3-beta-glucan molecule and transfers the newly generated reducing end (the donor) to the non-reducing end of another 1,3-beta-glucan molecule (the acceptor) forming a 1,3-beta linkage, resulting in the elongation of 1,3-beta-glucan chains in the cell wall. Involved in cell wall biosynthesis and morphogenesis. This Arthroderma benhamiae (strain ATCC MYA-4681 / CBS 112371) (Trichophyton mentagrophytes) protein is 1,3-beta-glucanosyltransferase ARB_07487.